Consider the following 335-residue polypeptide: Casein kinase I (335 aa).

Residues 9-278 (YRLGRKIGSG…LRRLFKDLFF (270 aa)) enclose the Protein kinase domain. ATP contacts are provided by residues 15-23 (IGSGSFGDI) and Lys-38. The Proton acceptor role is filled by Asp-128. A disordered region spans residues 304–335 (RSMVNQGAESGNQWRRDASGRDPLGRLPQLEP). A compositionally biased stretch (polar residues) spans 305–316 (SMVNQGAESGNQ). Basic and acidic residues predominate over residues 317–327 (WRRDASGRDPL).

This sequence belongs to the protein kinase superfamily. CK1 Ser/Thr protein kinase family. Casein kinase I subfamily.

The catalysed reaction is L-seryl-[protein] + ATP = O-phospho-L-seryl-[protein] + ADP + H(+). It carries out the reaction L-threonyl-[protein] + ATP = O-phospho-L-threonyl-[protein] + ADP + H(+). In terms of biological role, casein kinases are operationally defined by their preferential utilization of acidic proteins such as caseins as substrates. It can phosphorylate a large number of proteins. In Eimeria tenella (Coccidian parasite), this protein is Casein kinase I.